The chain runs to 533 residues: Frizzled/smoothened-like sans CRD protein H (533 aa).

An N-terminal signal peptide occupies residues 1-21 (MFIKFYFFIIFLILNFKNNYA). Topologically, residues 22–103 (SPTLLDSVLS…GDWTTMMDMS (82 aa)) are extracellular. Asn-76 carries an N-linked (GlcNAc...) asparagine glycan. A helical membrane pass occupies residues 104-124 (LIVATISFFASIFLILTYSPL). The Cytoplasmic portion of the chain corresponds to 125 to 134 (MNPSYNNRHT). A helical transmembrane segment spans residues 135–155 (IGILSMSFGIFLIMFTDMYNL). Over 156 to 177 (KKRFTLGCPSETRYAIQNDADC) the chain is Extracellular. The chain crosses the membrane as a helical span at residues 178 to 198 (LITGLIFQFGCVSAVFFWTAL). The Cytoplasmic portion of the chain corresponds to 199 to 216 (SLDLYFQITNRNISRKYD). A helical membrane pass occupies residues 217–237 (LYYFIGVNLISLIFTFVPVIS). At 238–259 (KSYGYGDFALGCWILDFNYALG) the chain is on the extracellular side. A helical membrane pass occupies residues 260-280 (CFWIPLSVCLIFSTVVVLMIL). Residues 281–302 (YEVYKIYKASNQKTSLKGHIKP) are Cytoplasmic-facing. A helical transmembrane segment spans residues 303 to 323 (LLCLISNCFEFFYVFGYSLYL). The Extracellular segment spans residues 324–360 (ATKLTELHDNMDAYIKCLFLNSQNDPDSYTCPDHRLK). The chain crosses the membrane as a helical span at residues 361–381 (LGPQFLFFLSLRLLGVSGIVF). The Cytoplasmic segment spans residues 382–533 (YGTNSKVRKI…LTNINTIDNV (152 aa)). Residues 454 to 533 (IIVTPGGDDD…LTNINTIDNV (80 aa)) are disordered. Residues 466 to 518 (NNNNNNNNNNNNNNNNNNNNNNNNNNNNNNNNNNNNNNNNNNNNNSNENNENN) show a composition bias toward low complexity. The stretch at 501-528 (NNNNNNNNNNSNENNENNTQEIELTNIN) forms a coiled coil. Residues 519–533 (TQEIELTNINTIDNV) are compositionally biased toward polar residues.

It belongs to the G-protein coupled receptor Fz/Smo family.

The protein resides in the membrane. The sequence is that of Frizzled/smoothened-like sans CRD protein H (fscH) from Dictyostelium discoideum (Social amoeba).